Consider the following 926-residue polypeptide: Vacuolar protein sorting-associated protein 39 homolog (926 aa).

Positions 15–306 (PVEVTCLAFQ…MTLCSGARGQ (292 aa)) constitute a CNH domain. One copy of the CHCR repeat lies at 590–768 (DETEMARNLN…LFRTLVHPNQ (179 aa)).

Belongs to the VAM6/VPS39 family. In terms of assembly, probable core component of the homotypic fusion and vacuole protein sorting (HOPS) complex consisting of the core class C Vps proteins vps-11, vps-16, vps-18, and which further associates with vps-33.1, vps-39 and vps-41. May interact with lgg-2. Interacts with cuti-1.

The protein resides in the cytoplasm. The protein localises to the lysosome membrane. Its subcellular location is the late endosome membrane. It localises to the late endosome. It is found in the lysosome. In terms of biological role, plays a role in vesicle-mediated protein trafficking to lysosomal compartments including the endocytic membrane transport and autophagic pathways. Believed to act in part as a component of the putative HOPS endosomal tethering complex which is proposed to be involved in the rab-5-to-rab-7 endosome conversion probably implicating sand-1, and via binding SNAREs and SNARE complexes to mediate tethering and docking events during SNARE-mediated membrane fusion. The HOPS complex is proposed to be recruited to rab-7 on the late endosomal membrane and to regulate late endocytic, phagocytic and autophagic traffic towards lysosomes. Involved in homotypic vesicle fusions between late endosomes and in heterotypic fusions between late endosomes and lysosomes. Required for fusion of endosomes. In association with lgg-2 mediates the tethering of autophagosomes with lysosomes to form autolysosomes. Within the HOPS complex, contributes to the normal development of gut granules in embryonic and adult intestinal cells. The chain is Vacuolar protein sorting-associated protein 39 homolog from Caenorhabditis elegans.